The primary structure comprises 433 residues: Pyrimidine-nucleoside phosphorylase (433 aa).

81-83 contacts phosphate; sequence KHS. K(+)-binding residues include Gly-88 and Thr-90. Residues Thr-92, 108–110, and Thr-120 contribute to the phosphate site; that span reads KMS. Positions 168 and 187 each coordinate substrate. Positions 243, 246, and 255 each coordinate K(+).

It belongs to the thymidine/pyrimidine-nucleoside phosphorylase family. Homodimer. K(+) serves as cofactor.

It catalyses the reaction uridine + phosphate = alpha-D-ribose 1-phosphate + uracil. It carries out the reaction thymidine + phosphate = 2-deoxy-alpha-D-ribose 1-phosphate + thymine. The catalysed reaction is 2'-deoxyuridine + phosphate = 2-deoxy-alpha-D-ribose 1-phosphate + uracil. Catalyzes phosphorolysis of the pyrimidine nucleosides uridine, thymidine and 2'-deoxyuridine with the formation of the corresponding pyrimidine base and ribose-1-phosphate. The chain is Pyrimidine-nucleoside phosphorylase (pdp) from Staphylococcus aureus (strain Mu50 / ATCC 700699).